The sequence spans 188 residues: Photosystem I assembly protein Ycf4 (188 aa).

2 helical membrane-spanning segments follow: residues 22–42 (LGWASVLLLGTSGFLLTGLSS) and 68–88 (LVMCFYGIAGLFLSTYLWCAI).

It belongs to the Ycf4 family.

The protein localises to the plastid. Its subcellular location is the chloroplast thylakoid membrane. Seems to be required for the assembly of the photosystem I complex. The protein is Photosystem I assembly protein Ycf4 of Zygnema circumcarinatum (Green alga).